The primary structure comprises 837 residues: Mannosyl-oligosaccharide glucosidase (837 aa).

Over residues 1–10 the composition is skewed to basic residues; sequence MARGERRRRA. Over 1 to 38 the chain is Cytoplasmic; sequence MARGERRRRAVPAEGVRTAERAARGGPGRRDGRGGGPR. The disordered stretch occupies residues 1–39; sequence MARGERRRRAVPAEGVRTAERAARGGPGRRDGRGGGPRS. Positions 3-9 match the Endoplasmic reticulum targeting motif; the sequence is RGERRRR. Over residues 17–33 the composition is skewed to basic and acidic residues; the sequence is RTAERAARGGPGRRDGR. Residues 39–59 traverse the membrane as a helical; Signal-anchor for type II membrane protein segment; the sequence is STAGGVALAVVVLSLALGMSG. The Lumenal portion of the chain corresponds to 60–837; sequence RWVLAWYRAR…LVLLAMAEDY (778 aa). The segment at 76-137 is required for endoplasmic reticulum targeting; sequence SAPPVLPADS…PGTPKLRHTC (62 aa). D583 serves as the catalytic Proton donor. N657 is a glycosylation site (N-linked (GlcNAc...) asparagine). Catalysis depends on E807, which acts as the Proton acceptor.

The protein belongs to the glycosyl hydrolase 63 family.

The protein resides in the endoplasmic reticulum membrane. It catalyses the reaction N(4)-(alpha-D-Glc-(1-&gt;2)-alpha-D-Glc-(1-&gt;3)-alpha-D-Glc-(1-&gt;3)-alpha-D-Man-(1-&gt;2)-alpha-D-Man-(1-&gt;2)-alpha-D-Man-(1-&gt;3)-[alpha-D-Man-(1-&gt;2)-alpha-D-Man-(1-&gt;3)-[alpha-D-Man-(1-&gt;2)-alpha-D-Man-(1-&gt;6)]-alpha-D-Man-(1-&gt;6)]-beta-D-Man-(1-&gt;4)-beta-D-GlcNAc-(1-&gt;4)-beta-D-GlcNAc)-L-asparaginyl-[protein] + H2O = N(4)-(alpha-D-Glc-(1-&gt;3)-alpha-D-Glc-(1-&gt;3)-alpha-D-Man-(1-&gt;2)-alpha-D-Man-(1-&gt;2)-alpha-D-Man-(1-&gt;3)-[alpha-D-Man-(1-&gt;2)-alpha-D-Man-(1-&gt;3)-[alpha-D-Man-(1-&gt;2)-alpha-D-Man-(1-&gt;6)]-alpha-D-Man-(1-&gt;6)]-beta-D-Man-(1-&gt;4)-beta-D-GlcNAc-(1-&gt;4)-beta-D-GlcNAc)-L-asparaginyl-[protein] + beta-D-glucose. The protein operates within glycan metabolism; N-glycan degradation. Its activity is regulated as follows. Inhibited by 1-deoxynojirimycin (40% inhibition) and N,N-dimethyl-deoxynojirimycin (85% inhibition). Its function is as follows. In the context of N-glycan degradation, cleaves the distal alpha 1,2-linked glucose residue from the Glc(3)Man(9)GlcNAc(2) oligosaccharide precursor in a highly specific manner. The chain is Mannosyl-oligosaccharide glucosidase from Homo sapiens (Human).